The chain runs to 126 residues: Small ribosomal subunit protein uS13 (126 aa).

The disordered stretch occupies residues 93 to 126; the sequence is RRGLPVRGQRTKTNARTRKGPKRTVAGKKKAGRK.

It belongs to the universal ribosomal protein uS13 family. As to quaternary structure, part of the 30S ribosomal subunit. Forms a loose heterodimer with protein S19. Forms two bridges to the 50S subunit in the 70S ribosome.

In terms of biological role, located at the top of the head of the 30S subunit, it contacts several helices of the 16S rRNA. In the 70S ribosome it contacts the 23S rRNA (bridge B1a) and protein L5 of the 50S subunit (bridge B1b), connecting the 2 subunits; these bridges are implicated in subunit movement. Contacts the tRNAs in the A and P-sites. The protein is Small ribosomal subunit protein uS13 of Beutenbergia cavernae (strain ATCC BAA-8 / DSM 12333 / CCUG 43141 / JCM 11478 / NBRC 16432 / NCIMB 13614 / HKI 0122).